The primary structure comprises 115 residues: Large ribosomal subunit protein bL19 (115 aa).

The protein belongs to the bacterial ribosomal protein bL19 family.

Functionally, this protein is located at the 30S-50S ribosomal subunit interface and may play a role in the structure and function of the aminoacyl-tRNA binding site. The sequence is that of Large ribosomal subunit protein bL19 from Escherichia coli O139:H28 (strain E24377A / ETEC).